We begin with the raw amino-acid sequence, 252 residues long: Ubiquinone biosynthesis protein COQ4 homolog 1, mitochondrial (252 aa).

Zn(2+)-binding residues include histidine 130, aspartate 131, histidine 134, and glutamate 146.

The protein belongs to the COQ4 family. As to quaternary structure, component of a multi-subunit COQ enzyme complex. Zn(2+) is required as a cofactor.

It is found in the mitochondrion inner membrane. The enzyme catalyses a 4-hydroxy-3-methoxy-5-(all-trans-polyprenyl)benzoate + H(+) = a 2-methoxy-6-(all-trans-polyprenyl)phenol + CO2. It functions in the pathway cofactor biosynthesis; ubiquinone biosynthesis. Functionally, lyase that catalyzes the C1-decarboxylation of 4-hydroxy-3-methoxy-5-(all-trans-polyprenyl)benzoic acid into 2-methoxy-6-(all-trans-polyprenyl)phenol during ubiquinone biosynthesis. The chain is Ubiquinone biosynthesis protein COQ4 homolog 1, mitochondrial from Trypanosoma cruzi (strain CL Brener).